Reading from the N-terminus, the 222-residue chain is Cytidylate kinase (222 aa).

Glycine 9–threonine 17 contributes to the ATP binding site.

This sequence belongs to the cytidylate kinase family. Type 1 subfamily.

The protein resides in the cytoplasm. It carries out the reaction CMP + ATP = CDP + ADP. The catalysed reaction is dCMP + ATP = dCDP + ADP. The sequence is that of Cytidylate kinase from Thermosipho africanus (strain TCF52B).